Consider the following 603-residue polypeptide: ATP-dependent lipid A-core flippase (603 aa).

A run of 4 helical transmembrane segments spans residues 20-40, 79-99, 170-190, and 269-289; these read LGYV…FLIF, LVYA…LGSF, VFLF…MLAI, and PMLQ…VLWL. Residues 31–324 form the ABC transmembrane type-1 domain; it reads LLSIVGFLIF…LSEVSSTVQR (294 aa). Positions 356–592 constitute an ABC transporter domain; it reads LEVRNLSFRY…NGHYARLHAM (237 aa). 390-397 provides a ligand contact to ATP; that stretch reads GRSGSGKS.

Belongs to the ABC transporter superfamily. Lipid exporter (TC 3.A.1.106) family. In terms of assembly, homodimer.

Its subcellular location is the cell inner membrane. The catalysed reaction is ATP + H2O + lipid A-core oligosaccharideSide 1 = ADP + phosphate + lipid A-core oligosaccharideSide 2.. Involved in lipopolysaccharide (LPS) biosynthesis. Translocates lipid A-core from the inner to the outer leaflet of the inner membrane. Transmembrane domains (TMD) form a pore in the inner membrane and the ATP-binding domain (NBD) is responsible for energy generation. This is ATP-dependent lipid A-core flippase from Pseudomonas aeruginosa (strain ATCC 15692 / DSM 22644 / CIP 104116 / JCM 14847 / LMG 12228 / 1C / PRS 101 / PAO1).